The sequence spans 437 residues: Phosphomethylpyrimidine synthase (437 aa).

Residues Asn-69, Met-98, Tyr-127, His-163, 185-187, 226-229, and Glu-265 contribute to the substrate site; these read SRG and DACR. His-269 lines the Zn(2+) pocket. Tyr-292 provides a ligand contact to substrate. His-333 is a binding site for Zn(2+). 3 residues coordinate [4Fe-4S] cluster: Cys-409, Cys-412, and Cys-416.

It belongs to the ThiC family. [4Fe-4S] cluster is required as a cofactor.

It catalyses the reaction 5-amino-1-(5-phospho-beta-D-ribosyl)imidazole + S-adenosyl-L-methionine = 4-amino-2-methyl-5-(phosphooxymethyl)pyrimidine + CO + 5'-deoxyadenosine + formate + L-methionine + 3 H(+). The protein operates within cofactor biosynthesis; thiamine diphosphate biosynthesis. In terms of biological role, catalyzes the synthesis of the hydroxymethylpyrimidine phosphate (HMP-P) moiety of thiamine from aminoimidazole ribotide (AIR) in a radical S-adenosyl-L-methionine (SAM)-dependent reaction. The chain is Phosphomethylpyrimidine synthase from Clostridium botulinum (strain ATCC 19397 / Type A).